We begin with the raw amino-acid sequence, 263 residues long: Indole-3-glycerol phosphate synthase (263 aa).

This sequence belongs to the TrpC family.

The catalysed reaction is 1-(2-carboxyphenylamino)-1-deoxy-D-ribulose 5-phosphate + H(+) = (1S,2R)-1-C-(indol-3-yl)glycerol 3-phosphate + CO2 + H2O. The protein operates within amino-acid biosynthesis; L-tryptophan biosynthesis; L-tryptophan from chorismate: step 4/5. The polypeptide is Indole-3-glycerol phosphate synthase (Desulfosudis oleivorans (strain DSM 6200 / JCM 39069 / Hxd3) (Desulfococcus oleovorans)).